A 1978-amino-acid chain; its full sequence is Sodium channel protein type 8 subunit alpha (1978 aa).

Disordered stretches follow at residues 1–20 (MAAR…FTPE) and 28–62 (RIAE…LEAG). The Cytoplasmic portion of the chain corresponds to 1–132 (MAARVLAPPG…RIAIKILIHS (132 aa)). Residues 28–61 (RIAESKLKKPPKADGSHREDDEDSKPKPNSDLEA) are compositionally biased toward basic and acidic residues. An I repeat occupies 114–442 (ILSPFNLIRR…KAMLEQLKKQ (329 aa)). The helical transmembrane segment at 133-151 (VFSMIIMCTILTNCVFMTF) threads the bilayer. The Extracellular portion of the chain corresponds to 152-158 (SNPPEWS). The helical transmembrane segment at 159 to 179 (KNVEYTFTGIYTFESLVKIIA) threads the bilayer. Residues 180–193 (RGFCIDGFTFLRDP) lie on the Cytoplasmic side of the membrane. The helical transmembrane segment at 194-211 (WNWLDFSVIMMAYVTEFV) threads the bilayer. Topologically, residues 212–217 (DLGNVS) are extracellular. The N-linked (GlcNAc...) asparagine glycan is linked to asparagine 215. The chain crosses the membrane as a helical span at residues 218 to 234 (ALRTFRVLRALKTISVI). At 235-253 (PGLKTIVGALIQSVKKLSD) the chain is on the cytoplasmic side. A helical transmembrane segment spans residues 254-273 (VMILTVFCLSVFALIGLQLF). Residues 274–355 (MGNLRNKCVV…PNYGYTSFDT (82 aa)) lie on the Extracellular side of the membrane. Cysteine 281 and cysteine 333 are joined by a disulfide. 4 N-linked (GlcNAc...) asparagine glycosylation sites follow: asparagine 289, asparagine 295, asparagine 308, and asparagine 326. An intramembrane region (pore-forming) is located at residues 356–380 (FSWAFLALFRLMTQDYWENLYQLTL). Glutamate 373 is a Na(+) binding site. The Extracellular portion of the chain corresponds to 381-387 (RAAGKTY). Residues 388-408 (MIFFVLVIFVGSFYLVNLILA) form a helical membrane-spanning segment. At 409–751 (VVAMAYEEQN…EIVNLIVMDP (343 aa)) the chain is on the cytoplasmic side. Disordered regions lie at residues 446-530 (AQAA…KAFR) and 576-597 (DPGS…SEGR). A compositionally biased stretch (low complexity) spans 473 to 486 (SPRSSSELSKLSSK). Positions 489 to 500 (KERRNRRKKRKQ) are enriched in basic residues. Basic and acidic residues-rich tracts occupy residues 501–530 (KELS…KAFR) and 586–597 (DEHSTVEESEGR). Phosphoserine is present on residues serine 518 and serine 520. The II repeat unit spans residues 733 to 1005 (CHPYWIKLKE…QISVIRIKKG (273 aa)). The helical transmembrane segment at 752–770 (FVDLAITICIVLNTLFMAM) threads the bilayer. At 771–781 (EHHPMTPQFEH) the chain is on the extracellular side. Residues 782–801 (VLAVGNLVFTGIFTAEMFLK) traverse the membrane as a helical segment. The Cytoplasmic portion of the chain corresponds to 802-815 (LIAMDPYYYFQEGW). Residues 816–835 (NIFDGFIVSLSLMELGLADV) form a helical membrane-spanning segment. The Extracellular segment spans residues 836-837 (EG). A helical membrane pass occupies residues 838-855 (LSVLRSFRLLRVFKLAKS). Over 856–871 (WPTLNMLIKIIGNSVG) the chain is Cytoplasmic. Residues 872–890 (ALGNLTLVLAIIVFIFAVV) traverse the membrane as a helical segment. At 891–919 (GMQLFGKSYKECVCKISQECKLPRWHMND) the chain is on the extracellular side. Cysteine 904 and cysteine 910 are disulfide-bonded. An intramembrane region (pore-forming) is located at residues 920–940 (FFHSFLIVFRVLCGEWIETMW). Na(+)-binding residues include glutamate 934 and glutamate 937. The Extracellular segment spans residues 941 to 953 (DCMEVAGQAMCLI). Cysteines 942 and 951 form a disulfide. Residues 954-974 (VFMMVMVIGNLVVLNLFLALL) traverse the membrane as a helical segment. Over 975-1197 (LSSFSADNLA…TCFLIVEHNW (223 aa)) the chain is Cytoplasmic. The disordered stretch occupies residues 1105 to 1146 (NLNTEDVSSESDPEGSKDKLDDTSSSEGSTIDIKPEVEEVPV). Residues 1178–1493 (LGKSWWILRK…KKYYNAMKKL (316 aa)) form an III repeat. The chain crosses the membrane as a helical span at residues 1198–1215 (FETFIIFMILLSSGALAF). The Extracellular segment spans residues 1216–1228 (EDIYIEQRKTIRT). Residues 1229-1247 (ILEYADKVFTYIFILEMLL) form a helical membrane-spanning segment. Residues 1248–1261 (KWTAYGFVKFFTNA) lie on the Cytoplasmic side of the membrane. A helical transmembrane segment spans residues 1262-1280 (WCWLDFLIVAVSLVSLIAN). The Extracellular portion of the chain corresponds to 1281–1288 (ALGYSELG). The helical transmembrane segment at 1289–1307 (AIKSLRTLRALRPLRALSR) threads the bilayer. The Cytoplasmic segment spans residues 1308-1324 (FEGMRVVVNALVGAIPS). A helical membrane pass occupies residues 1325 to 1344 (IMNVLLVCLIFWLIFSIMGV). Over 1345 to 1397 (NLFAGKYHYCFNETSEIRFEIDEVNNKTDCEKLMEGNNTEIRWKNVKINFDNV) the chain is Extracellular. Cysteine 1354 and cysteine 1374 form a disulfide bridge. N-linked (GlcNAc...) asparagine glycosylation is found at asparagine 1356, asparagine 1370, and asparagine 1381. The pore-forming intramembrane region spans 1398-1419 (GAGYLALLQVATFKGWMDIMYA). Topologically, residues 1420 to 1436 (AVDSRKPDEQPDYEGNI) are extracellular. Residues 1437 to 1458 (YMYIYFVIFIIFGSFFTLNLFI) traverse the membrane as a helical segment. The Cytoplasmic portion of the chain corresponds to 1459–1521 (GVIIDNFNQQ…IVFDFVTQQA (63 aa)). Position 1495 is a phosphoserine; by PKC (serine 1495). One copy of the IV repeat lies at 1502–1799 (IPRPLNKIQG…WEKFDPDATQ (298 aa)). A helical transmembrane segment spans residues 1522-1539 (FDIVIMMLICLNMVTMMV). Residues 1540–1550 (ETDTQSKQMEN) are Extracellular-facing. A helical transmembrane segment spans residues 1551-1569 (ILYWINLVFVIFFTCECVL). The Cytoplasmic portion of the chain corresponds to 1570 to 1581 (KMFALRHYYFTI). Residues 1582–1599 (GWNIFDFVVVILSIVGMF) traverse the membrane as a helical segment. Over 1600–1612 (LADIIEKYFVSPT) the chain is Extracellular. The helical transmembrane segment at 1613–1629 (LFRVIRLARIGRILRLI) threads the bilayer. Residues 1630 to 1648 (KGAKGIRTLLFALMMSLPA) are Cytoplasmic-facing. A helical membrane pass occupies residues 1649–1666 (LFNIGLLLFLVMFIFSIF). At 1667 to 1688 (GMSNFAYVKHEAGIDDMFNFET) the chain is on the extracellular side. Positions 1689 to 1711 (FGNSMICLFQITTSAGWDGLLLP) form an intramembrane region, pore-forming. The Extracellular portion of the chain corresponds to 1712-1740 (ILNRPPDCSLDKEHPGSGFKGDCGNPSVG). A disulfide bridge connects residues cysteine 1719 and cysteine 1734. A helical transmembrane segment spans residues 1741-1763 (IFFFVSYIIISFLIVVNMYIAII). The Cytoplasmic segment spans residues 1764 to 1978 (LENFSVATEE…RQKEVRESKC (215 aa)). Positions 1893–1922 (EEVSAVVLQRAYRGHLARRGFICRKITSNK) constitute an IQ domain. The segment at 1924-1978 (ENGGTHREKKESTPSTASLPSYDSVTKPDKEKQQRAEEGRRERAKRQKEVRESKC) is disordered. Positions 1936–1947 (TPSTASLPSYDS) are enriched in polar residues. Residues 1949-1978 (TKPDKEKQQRAEEGRRERAKRQKEVRESKC) are compositionally biased toward basic and acidic residues.

Belongs to the sodium channel (TC 1.A.1.10) family. Nav1.6/SCN8A subfamily. The voltage-sensitive sodium channel consists of an ion-conducting pore-forming alpha subunit regulated by one or more beta-1 (SCN1B), beta-2 (SCN2B), beta-3 (SCN3B) and/or beta-4 (SCN4B) subunits. Beta-1 (SCN1B) and beta-3 (SCN3B) are non-covalently associated with alpha, while beta-2 (SCN2B) and beta-4 (SCN4B) are covalently linked by disulfide bonds. Interacts with FGF13. Interacts with NEDD4 and NEDD4L. Interacts with FGF14, GBG3, GBB2 and SCN1B. Interacts with TMEM233. Interacts with the conotoxin GVIIJ. Interacts with the scorpion toxin BMK M1. Interacts with CALM1; the interaction modulates the inactivation rate of SCN8A. In terms of processing, may be ubiquitinated by NEDD4L; which would promote its endocytosis. Post-translationally, phosphorylation at Ser-1495 by PKC in a highly conserved cytoplasmic loop slows inactivation of the sodium channel and reduces peak sodium currents. In terms of tissue distribution, expressed in the hippocampus (at protein level). Expressed in brain, cerebellum and spinal cord. As to expression, expressed in non-neuronal tissues, such as monocytes/macrophages.

Its subcellular location is the cell membrane. The protein localises to the cell projection. It localises to the axon. The protein resides in the cytoplasmic vesicle. It is found in the podosome. It catalyses the reaction Na(+)(in) = Na(+)(out). Its function is as follows. Pore-forming subunit of a voltage-gated sodium channel complex assuming opened or closed conformations in response to the voltage difference across membranes and through which sodium ions selectively pass along their electrochemical gradient. Contributes to neuronal excitability by regulating action potential threshold and propagation. Functionally, more specifically expressed in non-neuronal cells, could play a role in sodium release from intracellular compartments and participate in the control of podosomes formation and macrophages adhesion and movement. This Mus musculus (Mouse) protein is Sodium channel protein type 8 subunit alpha.